Reading from the N-terminus, the 299-residue chain is MLFPTALIFGCWALVIEGADNRRPIWNMGHMVNEVYQIDEFVDLGANSIETDITFDDDAMAEYSYHGVPCDCRRWCHKWEYVNVFLDGLRRATTPGDSKYRPELTLVVFDLKTGDLSSSTAYKGGKLFAQKLLDRYWNGGNNGGRAYIIISIPDIDHYAFITGFREALKNANHEELLDKVGYDFSGNDDLSSTRTALNKAGVKDREHVWQSDGITNCILRGLDRVREAVRNRDSSNGYINKVYYWTIEKYVSVRDALDAGVDGIMTNEPDVIVNVLNEGNYRGRFRLANYDDNPWVTFK.

Positions 1 to 18 (MLFPTALIFGCWALVIEG) are cleaved as a signal peptide. Residue His30 is part of the active site. Mg(2+)-binding residues include Glu50 and Asp52. The Nucleophile role is filled by His66. 2 cysteine pairs are disulfide-bonded: Cys70–Cys76 and Cys72–Cys217. Asp110 provides a ligand contact to Mg(2+).

This sequence belongs to the arthropod phospholipase D family. Class II subfamily. Class IIa sub-subfamily. Mg(2+) is required as a cofactor. In terms of tissue distribution, expressed by the venom gland.

It localises to the secreted. The catalysed reaction is an N-(acyl)-sphingosylphosphocholine = an N-(acyl)-sphingosyl-1,3-cyclic phosphate + choline. It catalyses the reaction an N-(acyl)-sphingosylphosphoethanolamine = an N-(acyl)-sphingosyl-1,3-cyclic phosphate + ethanolamine. The enzyme catalyses a 1-acyl-sn-glycero-3-phosphocholine = a 1-acyl-sn-glycero-2,3-cyclic phosphate + choline. It carries out the reaction a 1-acyl-sn-glycero-3-phosphoethanolamine = a 1-acyl-sn-glycero-2,3-cyclic phosphate + ethanolamine. Dermonecrotic toxins cleave the phosphodiester linkage between the phosphate and headgroup of certain phospholipids (sphingolipid and lysolipid substrates), forming an alcohol (often choline) and a cyclic phosphate. This toxin acts on sphingomyelin (SM) with high activity. It may also act on ceramide phosphoethanolamine (CPE), lysophosphatidylcholine (LPC) and lysophosphatidylethanolamine (LPE), but not on lysophosphatidylserine (LPS), and lysophosphatidylglycerol (LPG). It acts by transphosphatidylation, releasing exclusively cyclic phosphate products as second products. Has hemolytic activity in human erythrocytes in a dose-dependent manner. In vivo, this toxin induces dermonecrosis, edema, hemorrhage, massive inflammatory response, as well as vascular permeability. In addition, thrombus formation has also been detected in dermal blood vessels. It also induces platelet aggregation. It is noteworthy that a Glu-248 replaces the Asp present in paralogs, without decrease in catalytic and hemolytic activities. This chain is Dermonecrotic toxin LiSicTox-alphaIVA1, found in Loxosceles intermedia (Brown spider).